The primary structure comprises 252 residues: Bridging integrator 3 homolog (252 aa).

The region spanning 8 to 231 (GGPKKQIVPK…VDEVQLSDAE (224 aa)) is the BAR domain. Coiled-coil stretches lie at residues 17-57 (KTVE…MSKS), 119-150 (SLNMAVKRREQALQDYKRLQTKVEKYEEKDKT), and 224-244 (EVQLSDAEREQENEARLAELR).

The protein localises to the cytoplasm. The protein resides in the cytoskeleton. Its function is as follows. Involved in cytokinesis and septation where it has a role in the localization of F-actin. The protein is Bridging integrator 3 homolog (bin3) of Xenopus laevis (African clawed frog).